A 547-amino-acid polypeptide reads, in one-letter code: Glucose-6-phosphate isomerase (547 aa).

Glu-351 serves as the catalytic Proton donor. Active-site residues include His-382 and Lys-509.

Belongs to the GPI family.

The protein resides in the cytoplasm. It catalyses the reaction alpha-D-glucose 6-phosphate = beta-D-fructose 6-phosphate. Its pathway is carbohydrate biosynthesis; gluconeogenesis. The protein operates within carbohydrate degradation; glycolysis; D-glyceraldehyde 3-phosphate and glycerone phosphate from D-glucose: step 2/4. Functionally, catalyzes the reversible isomerization of glucose-6-phosphate to fructose-6-phosphate. The protein is Glucose-6-phosphate isomerase of Coxiella burnetii (strain CbuK_Q154) (Coxiella burnetii (strain Q154)).